A 431-amino-acid chain; its full sequence is Enolase (431 aa).

Position 163 (Gln-163) interacts with (2R)-2-phosphoglycerate. The active-site Proton donor is the Glu-205. The Mg(2+) site is built by Asp-242, Glu-288, and Asp-315. Lys-340, Arg-369, Ser-370, and Lys-391 together coordinate (2R)-2-phosphoglycerate. The Proton acceptor role is filled by Lys-340.

This sequence belongs to the enolase family. The cofactor is Mg(2+).

The protein resides in the cytoplasm. It is found in the secreted. It localises to the cell surface. It carries out the reaction (2R)-2-phosphoglycerate = phosphoenolpyruvate + H2O. It participates in carbohydrate degradation; glycolysis; pyruvate from D-glyceraldehyde 3-phosphate: step 4/5. Functionally, catalyzes the reversible conversion of 2-phosphoglycerate (2-PG) into phosphoenolpyruvate (PEP). It is essential for the degradation of carbohydrates via glycolysis. In Bacillus mycoides (strain KBAB4) (Bacillus weihenstephanensis), this protein is Enolase.